The primary structure comprises 923 residues: Phosphoenolpyruvate carboxylase (923 aa).

Residues His-149 and Lys-585 contribute to the active site.

It belongs to the PEPCase type 1 family. The cofactor is Mg(2+).

The enzyme catalyses oxaloacetate + phosphate = phosphoenolpyruvate + hydrogencarbonate. In terms of biological role, forms oxaloacetate, a four-carbon dicarboxylic acid source for the tricarboxylic acid cycle. The sequence is that of Phosphoenolpyruvate carboxylase from Nocardia farcinica (strain IFM 10152).